The primary structure comprises 537 residues: Tyrosine-protein kinase Yes (537 aa).

Positions 1–22 (MGCIKSKEDKGPSIKYRTEPKP) are enriched in basic and acidic residues. A disordered region spans residues 1 to 60 (MGCIKSKEDKGPSIKYRTEPKPDPGSQYGADPTQATQSPGIKGPAPNFNSHSMTPFGGSS). Residue glycine 2 is the site of N-myristoyl glycine attachment. Cysteine 3 carries the S-palmitoyl cysteine; in membrane form lipid modification. The region spanning 85 to 146 (GGVTVFVALY…PSNYVAPADS (62 aa)) is the SH3 domain. One can recognise an SH2 domain in the interval 152–249 (WYFGKMGRKD…GLCYRLTTVC (98 aa)). Positions 271-524 (LRLDVKLGQG…YIQSFLEDYF (254 aa)) constitute a Protein kinase domain. Residues 277–285 (LGQGCFGEV) and lysine 299 each bind ATP. Catalysis depends on aspartate 390, which acts as the Proton acceptor. Tyrosine 420 carries the post-translational modification Phosphotyrosine; by autocatalysis. Tyrosine 531 bears the Phosphotyrosine; by CSK mark.

The protein belongs to the protein kinase superfamily. Tyr protein kinase family. SRC subfamily. Post-translationally, autophosphorylated at Tyr-420 inducing activation. In terms of processing, palmitoylation at Cys-3 promotes membrane localization.

Its subcellular location is the cell membrane. It localises to the cytoplasm. The protein resides in the cytoskeleton. The protein localises to the microtubule organizing center. It is found in the centrosome. Its subcellular location is the cytosol. It localises to the cell junction. It carries out the reaction L-tyrosyl-[protein] + ATP = O-phospho-L-tyrosyl-[protein] + ADP + H(+). Its function is as follows. Non-receptor protein tyrosine kinase that is involved in the regulation of cell growth and survival, apoptosis, cell-cell adhesion, cytoskeleton remodeling, differentiation, G2/M progression and cytokinesis. The chain is Tyrosine-protein kinase Yes (yes1) from Xenopus laevis (African clawed frog).